Here is a 508-residue protein sequence, read N- to C-terminus: Photosystem II CP47 reaction center protein (508 aa).

Transmembrane regions (helical) follow at residues 21 to 36, 101 to 115, 140 to 156, 203 to 218, 237 to 252, and 457 to 472; these read SVHIMHTALVSGWAGS, IVFSGLCFLAAIWHW, GIHLFLSGVTCFGFGAF, IAAGTLGILAGLFHLS, VLSSSIAAVFFAAFVV, and TFALLFFFGHIWHGAR.

It belongs to the PsbB/PsbC family. PsbB subfamily. As to quaternary structure, PSII is composed of 1 copy each of membrane proteins PsbA, PsbB, PsbC, PsbD, PsbE, PsbF, PsbH, PsbI, PsbJ, PsbK, PsbL, PsbM, PsbT, PsbX, PsbY, PsbZ, Psb30/Ycf12, at least 3 peripheral proteins of the oxygen-evolving complex and a large number of cofactors. It forms dimeric complexes. It depends on Binds multiple chlorophylls. PSII binds additional chlorophylls, carotenoids and specific lipids. as a cofactor.

The protein localises to the plastid. It is found in the chloroplast thylakoid membrane. Functionally, one of the components of the core complex of photosystem II (PSII). It binds chlorophyll and helps catalyze the primary light-induced photochemical processes of PSII. PSII is a light-driven water:plastoquinone oxidoreductase, using light energy to abstract electrons from H(2)O, generating O(2) and a proton gradient subsequently used for ATP formation. This is Photosystem II CP47 reaction center protein from Drimys granadensis.